Here is a 259-residue protein sequence, read N- to C-terminus: 4-hydroxy-tetrahydrodipicolinate reductase (259 aa).

Residue 9-14 (GANGRM) coordinates NAD(+). R37 serves as a coordination point for NADP(+). NAD(+) contacts are provided by residues 92 to 94 (GTT) and 116 to 119 (ASNM). H149 serves as the catalytic Proton donor/acceptor. Position 150 (H150) interacts with (S)-2,3,4,5-tetrahydrodipicolinate. K153 serves as the catalytic Proton donor. (S)-2,3,4,5-tetrahydrodipicolinate is bound at residue 159–160 (GT).

It belongs to the DapB family.

Its subcellular location is the cytoplasm. The enzyme catalyses (S)-2,3,4,5-tetrahydrodipicolinate + NAD(+) + H2O = (2S,4S)-4-hydroxy-2,3,4,5-tetrahydrodipicolinate + NADH + H(+). It carries out the reaction (S)-2,3,4,5-tetrahydrodipicolinate + NADP(+) + H2O = (2S,4S)-4-hydroxy-2,3,4,5-tetrahydrodipicolinate + NADPH + H(+). It functions in the pathway amino-acid biosynthesis; L-lysine biosynthesis via DAP pathway; (S)-tetrahydrodipicolinate from L-aspartate: step 4/4. Its function is as follows. Catalyzes the conversion of 4-hydroxy-tetrahydrodipicolinate (HTPA) to tetrahydrodipicolinate. In Desulfovibrio desulfuricans (strain ATCC 27774 / DSM 6949 / MB), this protein is 4-hydroxy-tetrahydrodipicolinate reductase.